A 463-amino-acid chain; its full sequence is Cysteine--tRNA ligase (463 aa).

C28 is a Zn(2+) binding site. A 'HIGH' region motif is present at residues 30–40 (ITIYDLCHIGH). C209, H234, and E238 together coordinate Zn(2+). The 'KMSKS' region motif lies at 266–270 (KMSKS). An ATP-binding site is contributed by K269.

Belongs to the class-I aminoacyl-tRNA synthetase family. As to quaternary structure, monomer. Zn(2+) serves as cofactor.

The protein localises to the cytoplasm. The catalysed reaction is tRNA(Cys) + L-cysteine + ATP = L-cysteinyl-tRNA(Cys) + AMP + diphosphate. The polypeptide is Cysteine--tRNA ligase (Proteus mirabilis (strain HI4320)).